A 1302-amino-acid chain; its full sequence is Phosphoribosylformylglycinamidine synthase (1302 aa).

ATP-binding positions include G307–D318 and A678. Residues E718, N722, and D891 each contribute to the Mg(2+) site. A Glutamine amidotransferase type-1 domain is found at M1049–G1302. C1142 (nucleophile) is an active-site residue. Active-site residues include H1267 and E1269.

This sequence in the N-terminal section; belongs to the FGAMS family. Monomer.

Its subcellular location is the cytoplasm. It carries out the reaction N(2)-formyl-N(1)-(5-phospho-beta-D-ribosyl)glycinamide + L-glutamine + ATP + H2O = 2-formamido-N(1)-(5-O-phospho-beta-D-ribosyl)acetamidine + L-glutamate + ADP + phosphate + H(+). The protein operates within purine metabolism; IMP biosynthesis via de novo pathway; 5-amino-1-(5-phospho-D-ribosyl)imidazole from N(2)-formyl-N(1)-(5-phospho-D-ribosyl)glycinamide: step 1/2. Phosphoribosylformylglycinamidine synthase involved in the purines biosynthetic pathway. Catalyzes the ATP-dependent conversion of formylglycinamide ribonucleotide (FGAR) and glutamine to yield formylglycinamidine ribonucleotide (FGAM) and glutamate. This is Phosphoribosylformylglycinamidine synthase from Vibrio parahaemolyticus serotype O3:K6 (strain RIMD 2210633).